The sequence spans 131 residues: Arsenate reductase (131 aa).

Catalysis depends on nucleophile residues C10, C82, and C89. 2 cysteine pairs are disulfide-bonded: C10/C82 and C82/C89.

It belongs to the low molecular weight phosphotyrosine protein phosphatase family. Thioredoxin-coupled ArsC subfamily.

Its subcellular location is the cytoplasm. It carries out the reaction arsenate + [thioredoxin]-dithiol + H(+) = arsenite + [thioredoxin]-disulfide + H2O. Functionally, catalyzes the reduction of arsenate [As(V)] to arsenite [As(III)]. The protein is Arsenate reductase of Staphylococcus aureus (strain COL).